We begin with the raw amino-acid sequence, 550 residues long: Acetyl-coenzyme A transporter 1 (550 aa).

Topologically, residues 1–74 are cytoplasmic; it reads MSPTISHKDN…KRSYRAELSS (74 aa). Residue serine 42 is modified to Phosphoserine. A helical membrane pass occupies residues 75-95; sequence ILLLLFLYVLQGIPLGLAGSI. Over 96–113 the chain is Extracellular; sequence PLILQSKNVSYTDQAFFS. Asparagine 103 is a glycosylation site (N-linked (GlcNAc...) asparagine). Residues 114 to 134 form a helical membrane-spanning segment; sequence FVFWPFSLKLLWAPLVDAVYF. Over 135–141 the chain is Cytoplasmic; it reads KNFGRRK. Residues 142-162 traverse the membrane as a helical segment; the sequence is SWLVPTQYILGIFMIYLSTQV. The Extracellular portion of the chain corresponds to 163–256; that stretch reads DRLLGNIDGR…FQPQPRGIVT (94 aa). A helical membrane pass occupies residues 257–277; the sequence is LSDFLFFWGTVFLITTTLVAL. Residues 278–300 lie on the Cytoplasmic side of the membrane; the sequence is LKKETREASVVKEETQGITDTYK. The chain crosses the membrane as a helical span at residues 301–321; sequence LLFSIIKMPAVLAFCLLILTS. The Extracellular portion of the chain corresponds to 322-344; the sequence is KIGFSAADAVTGLKLVEEGVPKE. The helical transmembrane segment at 345 to 365 threads the bilayer; that stretch reads HLALLAVPMVPLQIILPLLIS. The Cytoplasmic portion of the chain corresponds to 366 to 375; the sequence is KYTAGPQPLN. Residues 376-396 traverse the membrane as a helical segment; that stretch reads IFYKAMPYRLLLGLEYALLVW. The Extracellular segment spans residues 397–405; the sequence is WTPKVEHQG. The helical transmembrane segment at 406–426 threads the bilayer; that stretch reads GFPIYYYIIVLLSYALHQVTL. At 427 to 509 the chain is on the cytoplasmic side; the sequence is YSMYVSIMAF…LGGSCVTALD (83 aa). The helical transmembrane segment at 510–530 threads the bilayer; it reads GYYVESIVCVLIGFGWWFFLG. At 531 to 550 the chain is on the extracellular side; that stretch reads PKFKKLQDEGPSSWKCKRTN.

The protein belongs to the SLC33A transporter family. Homodimerizes. As to expression, expressed in brain at all developmental stages. Detected in hippocampus, hypothalamus, cerebellum, cortex, olfactory bulb, and the ventral and dorsal anterior olfactory nucleus.

Its subcellular location is the endoplasmic reticulum membrane. The catalysed reaction is acetyl-CoA(in) = acetyl-CoA(out). Acetyl-CoA transporter that mediates active acetyl-CoA import through the endoplasmic reticulum (ER) membrane into the ER lumen where specific ER-based acetyl-CoA:lysine acetyltransferases are responsible for the acetylation of ER-based protein substrates, such as BACE1. Necessary for O-acetylation of gangliosides. This is Acetyl-coenzyme A transporter 1 (Slc33a1) from Rattus norvegicus (Rat).